Here is a 173-residue protein sequence, read N- to C-terminus: Translation initiation factor IF-3 (173 aa).

Belongs to the IF-3 family. In terms of assembly, monomer.

The protein localises to the cytoplasm. Functionally, IF-3 binds to the 30S ribosomal subunit and shifts the equilibrium between 70S ribosomes and their 50S and 30S subunits in favor of the free subunits, thus enhancing the availability of 30S subunits on which protein synthesis initiation begins. The polypeptide is Translation initiation factor IF-3 (Bacillus subtilis (strain 168)).